A 303-amino-acid chain; its full sequence is Albumin b-32 (303 aa).

Positions 112-137 (ATPTSSATTPGGSASAAGTRTSSATR) are enriched in low complexity. Positions 112 to 175 (ATPTSSATTP…GGGGADADAD (64 aa)) are disordered. The segment covering 146-156 (ARDDQGRQRPG) has biased composition (basic and acidic residues).

It belongs to the ribosome-inactivating protein family. Type 1 RIP subfamily. Monomer. Endosperm.

It localises to the cytoplasm. It carries out the reaction Endohydrolysis of the N-glycosidic bond at one specific adenosine on the 28S rRNA.. In terms of biological role, a possible regulatory factor for the synthesis of zeins, the major group of storage proteins. The chain is Albumin b-32 (O6) from Zea mays (Maize).